The sequence spans 160 residues: SsrA-binding protein (160 aa).

It belongs to the SmpB family.

The protein resides in the cytoplasm. Required for rescue of stalled ribosomes mediated by trans-translation. Binds to transfer-messenger RNA (tmRNA), required for stable association of tmRNA with ribosomes. tmRNA and SmpB together mimic tRNA shape, replacing the anticodon stem-loop with SmpB. tmRNA is encoded by the ssrA gene; the 2 termini fold to resemble tRNA(Ala) and it encodes a 'tag peptide', a short internal open reading frame. During trans-translation Ala-aminoacylated tmRNA acts like a tRNA, entering the A-site of stalled ribosomes, displacing the stalled mRNA. The ribosome then switches to translate the ORF on the tmRNA; the nascent peptide is terminated with the 'tag peptide' encoded by the tmRNA and targeted for degradation. The ribosome is freed to recommence translation, which seems to be the essential function of trans-translation. This Shewanella amazonensis (strain ATCC BAA-1098 / SB2B) protein is SsrA-binding protein.